Consider the following 457-residue polypeptide: Ribosomal protein uS12 methylthiotransferase RimO (457 aa).

The region spanning 30–140 (PTIGMVSLGC…VLDAVHGAVP (111 aa)) is the MTTase N-terminal domain. Positions 39, 75, 104, 171, 175, and 178 each coordinate [4Fe-4S] cluster. Residues 157 to 386 (LTPRHFSYLK…MQKAQAISEA (230 aa)) enclose the Radical SAM core domain. A TRAM domain is found at 389-456 (AARIGQRLEV…EYDLWGRAVL (68 aa)).

It belongs to the methylthiotransferase family. RimO subfamily. It depends on [4Fe-4S] cluster as a cofactor.

It is found in the cytoplasm. The catalysed reaction is L-aspartate(89)-[ribosomal protein uS12]-hydrogen + (sulfur carrier)-SH + AH2 + 2 S-adenosyl-L-methionine = 3-methylsulfanyl-L-aspartate(89)-[ribosomal protein uS12]-hydrogen + (sulfur carrier)-H + 5'-deoxyadenosine + L-methionine + A + S-adenosyl-L-homocysteine + 2 H(+). Its function is as follows. Catalyzes the methylthiolation of an aspartic acid residue of ribosomal protein uS12. In Cereibacter sphaeroides (strain ATCC 17025 / ATH 2.4.3) (Rhodobacter sphaeroides), this protein is Ribosomal protein uS12 methylthiotransferase RimO.